The primary structure comprises 176 residues: Large ribosomal subunit protein bL19 (176 aa).

It belongs to the bacterial ribosomal protein bL19 family.

This protein is located at the 30S-50S ribosomal subunit interface and may play a role in the structure and function of the aminoacyl-tRNA binding site. The polypeptide is Large ribosomal subunit protein bL19 (Sinorhizobium fredii (strain NBRC 101917 / NGR234)).